We begin with the raw amino-acid sequence, 303 residues long: Recombination-associated protein RdgC (303 aa).

It belongs to the RdgC family.

The protein resides in the cytoplasm. It is found in the nucleoid. Functionally, may be involved in recombination. The protein is Recombination-associated protein RdgC of Yersinia enterocolitica serotype O:8 / biotype 1B (strain NCTC 13174 / 8081).